We begin with the raw amino-acid sequence, 229 residues long: Cytochrome c oxidase subunit 2 (229 aa).

Over 1–26 (MSTWANLGLQDSASPLMEQLIFFHDH) the chain is Mitochondrial intermembrane. The chain crosses the membrane as a helical span at residues 27 to 48 (ALLILVMITVLVGYLMFMLFFN). Residues 49–62 (SYVNRFLLHGQLIE) are Mitochondrial matrix-facing. The chain crosses the membrane as a helical span at residues 63 to 82 (MIWTILPAIILLFIAMPSLR). Residues 83 to 229 (LLYLLDEINE…IKWISNSVNS (147 aa)) lie on the Mitochondrial intermembrane side of the membrane. Residues H161, C196, E198, C200, H204, and M207 each contribute to the Cu cation site. E198 contributes to the Mg(2+) binding site.

This sequence belongs to the cytochrome c oxidase subunit 2 family. In terms of assembly, component of the cytochrome c oxidase (complex IV, CIV), a multisubunit enzyme composed of a catalytic core of 3 subunits and several supernumerary subunits. The complex exists as a monomer or a dimer and forms supercomplexes (SCs) in the inner mitochondrial membrane with ubiquinol-cytochrome c oxidoreductase (cytochrome b-c1 complex, complex III, CIII). Cu cation serves as cofactor.

It is found in the mitochondrion inner membrane. The catalysed reaction is 4 Fe(II)-[cytochrome c] + O2 + 8 H(+)(in) = 4 Fe(III)-[cytochrome c] + 2 H2O + 4 H(+)(out). Component of the cytochrome c oxidase, the last enzyme in the mitochondrial electron transport chain which drives oxidative phosphorylation. The respiratory chain contains 3 multisubunit complexes succinate dehydrogenase (complex II, CII), ubiquinol-cytochrome c oxidoreductase (cytochrome b-c1 complex, complex III, CIII) and cytochrome c oxidase (complex IV, CIV), that cooperate to transfer electrons derived from NADH and succinate to molecular oxygen, creating an electrochemical gradient over the inner membrane that drives transmembrane transport and the ATP synthase. Cytochrome c oxidase is the component of the respiratory chain that catalyzes the reduction of oxygen to water. Electrons originating from reduced cytochrome c in the intermembrane space (IMS) are transferred via the dinuclear copper A center (CU(A)) of subunit 2 and heme A of subunit 1 to the active site in subunit 1, a binuclear center (BNC) formed by heme A3 and copper B (CU(B)). The BNC reduces molecular oxygen to 2 water molecules using 4 electrons from cytochrome c in the IMS and 4 protons from the mitochondrial matrix. The polypeptide is Cytochrome c oxidase subunit 2 (mt:CoII) (Drosophila narragansett (Fruit fly)).